The chain runs to 426 residues: Histidine--tRNA ligase (426 aa).

It belongs to the class-II aminoacyl-tRNA synthetase family. Homodimer.

Its subcellular location is the cytoplasm. It carries out the reaction tRNA(His) + L-histidine + ATP = L-histidyl-tRNA(His) + AMP + diphosphate + H(+). This chain is Histidine--tRNA ligase, found in Streptococcus pyogenes serotype M5 (strain Manfredo).